The chain runs to 245 residues: Probable transcriptional regulatory protein CPR_1922 (245 aa).

The protein belongs to the TACO1 family.

The protein localises to the cytoplasm. This Clostridium perfringens (strain SM101 / Type A) protein is Probable transcriptional regulatory protein CPR_1922.